A 101-amino-acid polypeptide reads, in one-letter code: Large ribosomal subunit protein uL24 (101 aa).

It belongs to the universal ribosomal protein uL24 family. Part of the 50S ribosomal subunit.

Its function is as follows. One of two assembly initiator proteins, it binds directly to the 5'-end of the 23S rRNA, where it nucleates assembly of the 50S subunit. In terms of biological role, one of the proteins that surrounds the polypeptide exit tunnel on the outside of the subunit. The protein is Large ribosomal subunit protein uL24 of Cereibacter sphaeroides (strain ATCC 17025 / ATH 2.4.3) (Rhodobacter sphaeroides).